The primary structure comprises 316 residues: MAEAGKHTTVLLQEAVEALALKPDGIYVDGTFGRGGHSRLILERLGKNGRLIAFDRDPVACAVGRSFGDERFCMVHSSYSRLQEVLRQLNIGQIDGVLLDLGVSSPQLEEATRGFSFSMEGPLDMRMDTTEGQTAAQWLASASEVQLEEVIKEYGEERFAKQIARAIVKARARQPLVTTSQLAAIVAAAIPARAREPKQNPATRTFQAIRIYLNQELERLSLALPQCVEMLKTGGRLVVISFHSLEDRIVKRFIREGANTDKLPKHLPLRADEVRRFSRASLQMVGKAVRPGVAEVECNPRARSAVMRVAERINTT.

Residues 35–37 (GGH), Asp-55, Tyr-79, Asp-100, and Gln-107 each bind S-adenosyl-L-methionine.

This sequence belongs to the methyltransferase superfamily. RsmH family.

It localises to the cytoplasm. The catalysed reaction is cytidine(1402) in 16S rRNA + S-adenosyl-L-methionine = N(4)-methylcytidine(1402) in 16S rRNA + S-adenosyl-L-homocysteine + H(+). Functionally, specifically methylates the N4 position of cytidine in position 1402 (C1402) of 16S rRNA. The sequence is that of Ribosomal RNA small subunit methyltransferase H from Nitrosospira multiformis (strain ATCC 25196 / NCIMB 11849 / C 71).